The following is a 201-amino-acid chain: Receptor expression-enhancing protein 6 (201 aa).

A run of 3 helical transmembrane segments spans residues Leu36 to Leu56, Trp89 to Phe109, and Cys117 to His137.

Belongs to the DP1 family. As to quaternary structure, interacts with STX3. Interacts with clathrin. In terms of tissue distribution, expressed in the inner segment of rod photoreceptors and outer plexiform layer of the retina (at protein level). Expressed in liver, but not detected in brain, muscle, kidney, retinal cone photoreceptors or retinal ganglion cells (at protein level). Highly expressed in the ganglion cell layer of the retina and in liver, and also detected at low levels in kidney and testis. Isoform 1: Expressed in the retina. Isoform 2: Expressed in liver.

Its subcellular location is the endoplasmic reticulum membrane. It is found in the cytoplasmic vesicle. It localises to the clathrin-coated vesicle membrane. Functionally, required for correct function and survival of retinal photoreceptors. Required for retinal development. In rod photoreceptors, facilitates stability and/or trafficking of guanylate cyclases and is required to maintain endoplasmic reticulum and mitochondrial homeostasis. May play a role in clathrin-coated intracellular vesicle trafficking of proteins from the endoplasmic reticulum to the retinal rod plasma membrane. The protein is Receptor expression-enhancing protein 6 (Reep6) of Mus musculus (Mouse).